The sequence spans 175 residues: Apoptosis regulator Bcl-2 homolog (175 aa).

Residues 75 to 94 (QVLEDKINWGRIITIIAFCA) carry the BH1 motif. Positions 105 to 120 (SPQYYDGIISEAITDA) match the BH2 motif.

The protein belongs to the Bcl-2 family. In terms of assembly, interacts with host BAX; this interaction inhibits BAX oligomerization and subsequent activation. Interacts with host BAK1.

It is found in the host mitochondrion. Plays a role in the inhibition of host apoptosis by sequestering and inactivating multiple proapoptotic BCL-2 proteins, including BAK1 and BAX. The protein is Apoptosis regulator Bcl-2 homolog of Vertebrata (FPV).